Here is a 249-residue protein sequence, read N- to C-terminus: Type III pantothenate kinase (249 aa).

6 to 13 provides a ligand contact to ATP; it reads DCGNSLIK. Residues Tyr-93 and 100-103 each bind substrate; that span reads GLDR. Asp-102 functions as the Proton acceptor in the catalytic mechanism. Asp-122 contacts K(+). Thr-125 lines the ATP pocket. Residue Thr-181 coordinates substrate.

The protein belongs to the type III pantothenate kinase family. In terms of assembly, homodimer. NH4(+) is required as a cofactor. Requires K(+) as cofactor.

It localises to the cytoplasm. It carries out the reaction (R)-pantothenate + ATP = (R)-4'-phosphopantothenate + ADP + H(+). The protein operates within cofactor biosynthesis; coenzyme A biosynthesis; CoA from (R)-pantothenate: step 1/5. Its function is as follows. Catalyzes the phosphorylation of pantothenate (Pan), the first step in CoA biosynthesis. The chain is Type III pantothenate kinase from Pseudomonas paraeruginosa (strain DSM 24068 / PA7) (Pseudomonas aeruginosa (strain PA7)).